Reading from the N-terminus, the 101-residue chain is Large ribosomal subunit protein P1 (101 aa).

The span at 61–72 shows a compositional bias: low complexity; that stretch reads AAPAAAAAPAAA. Positions 61–101 are disordered; that stretch reads AAPAAAAAPAAAEEAEEEAEEEEEEEEAEEEAAAGLGALFG. Residues 73 to 92 show a composition bias toward acidic residues; the sequence is EEAEEEAEEEEEEEEAEEEA.

It belongs to the eukaryotic ribosomal protein P1/P2 family. In terms of assembly, part of the 50S ribosomal subunit. Homodimer, it forms part of the ribosomal stalk which helps the ribosome interact with GTP-bound translation factors. Forms a heptameric uL10/P0(P1)2(P1)2(P1)2 complex, where uL10/P0 forms an elongated spine to which the P1 dimers bind in a sequential fashion.

Functionally, forms part of the ribosomal stalk, playing a central role in the interaction of the ribosome with GTP-bound translation factors. In Methanothermobacter thermautotrophicus (strain ATCC 29096 / DSM 1053 / JCM 10044 / NBRC 100330 / Delta H) (Methanobacterium thermoautotrophicum), this protein is Large ribosomal subunit protein P1.